Here is a 402-residue protein sequence, read N- to C-terminus: La-related protein 7 homolog (402 aa).

Positions 64 to 138 are HTH La-type RNA-binding-like region; it reads EPLNPDFLSA…FDNSSHMVIR (75 aa). The RRM-like region stretch occupies residues 148-230; sequence IPLYDRIIYV…LTRKEWTNRE (83 aa). Positions 288–400 are xRRM-like region; that stretch reads DFTKNLLTRI…EEEKNYWRML (113 aa). Residues 288–402 enclose the xRRM domain; the sequence is DFTKNLLTRI…EKNYWRMLKK (115 aa).

This sequence belongs to the LARP7 family. As to quaternary structure, component of the telomerase holoenzyme complex composed minimally of trt1 and the telomerase RNA template component. Interacts with skp1.

The protein resides in the chromosome. The protein localises to the telomere. It localises to the nucleus. It is found in the cytoplasm. In terms of biological role, RNA-binding protein required for assembly of the holoenzyme telomerase ribonucleoprotein (RNP) complex. Specifically binds telomerase RNA ter1 and promotes assembly of ter1 with catalytic subunit trt1. Telomerase is a ribonucleoprotein enzyme essential that copies new telomeric repeats onto chromosome ends and functions to maintain cell division. This is La-related protein 7 homolog from Schizosaccharomyces pombe (strain 972 / ATCC 24843) (Fission yeast).